The following is a 314-amino-acid chain: Fumarylacetoacetate hydrolase domain-containing protein 2 (314 aa).

3 residues coordinate a divalent metal cation: E159, E161, and D190. K203 is subject to N6-acetyllysine; alternate. An N6-succinyllysine; alternate modification is found at K203. The residue at position 234 (K234) is an N6-acetyllysine.

The protein belongs to the FAH family. The cofactor is Ca(2+). Requires Mg(2+) as cofactor.

In terms of biological role, may have hydrolase activity. The sequence is that of Fumarylacetoacetate hydrolase domain-containing protein 2 (FAHD2) from Pongo abelii (Sumatran orangutan).